The primary structure comprises 195 residues: Protein RD3 (195 aa).

Residues 22-54 are a coiled coil; that stretch reads AEMVLETLMMELAGQMREVERQQRERRSAVRKI. The span at 168–177 shows a compositional bias: basic and acidic residues; the sequence is TISEDVERDA. Residues 168–195 are disordered; that stretch reads TISEDVERDAPPPPRTWSMPEFRAPQAD.

In terms of assembly, monomer. Interacts with GUCY2E; promotes the exit of GUCY2E from the endoplasmic reticulum and its trafficking to the photoreceptor outer segments. The interaction with GUCY2E negatively regulates its activity. Interacts with GUCY2F; promotes the exit of GUCY2F from the endoplasmic reticulum and its trafficking to the photoreceptor outer segments. The interaction with GUCY2F negatively regulates its activity. Interacts with GUK1; up-regulates GUK1 activity. As to expression, expressed in the retina and in particular in the inner nuclear layer, in rod and cone outer segments, in the outer nuclear layer, in the outer plexiform layer and in the ganglion cell layer.

The protein localises to the cell projection. Its subcellular location is the cilium. It localises to the photoreceptor outer segment. It is found in the photoreceptor inner segment. The protein resides in the endosome. The protein localises to the nucleus. Its subcellular location is the cytoplasm. It localises to the perinuclear region. Its function is as follows. Plays a critical role in the regulation of enzymes involved in nucleotide cycle in photoreceptors. Inhibits the basal catalytic activity and the GCAP-stimulated activity of GUCY2E and GUCY2F, two retinal guanylyl cyclases involved in the production of cGMP in photoreceptors. Involved in the transport of GUCY2E and GUCY2F to their target sites in the photoreceptor outer segment. Up-regulates the activity of GUK1, a kinase that also plays an essential role for recycling GMP and indirectly, cGMP. Plays an important role for the survival of rods and cones in the retina. The chain is Protein RD3 (Rd3) from Mus musculus (Mouse).